The chain runs to 238 residues: Small ribosomal subunit protein uS3 (238 aa).

Positions 39–107 constitute a KH type-2 domain; that stretch reads MREFIHDYAK…ELHLNIVEIR (69 aa). A compositionally biased stretch (basic and acidic residues) spans 212-222; sequence PQAHDRRHSEA. Positions 212–238 are disordered; sequence PQAHDRRHSEAQEGAAPRPPRRDRERA.

The protein belongs to the universal ribosomal protein uS3 family. Part of the 30S ribosomal subunit. Forms a tight complex with proteins S10 and S14.

Binds the lower part of the 30S subunit head. Binds mRNA in the 70S ribosome, positioning it for translation. This is Small ribosomal subunit protein uS3 from Cereibacter sphaeroides (strain ATCC 17029 / ATH 2.4.9) (Rhodobacter sphaeroides).